A 374-amino-acid polypeptide reads, in one-letter code: Flagellar P-ring protein 1 (374 aa).

An N-terminal signal peptide occupies residues 1 to 29; the sequence is MPGVRWVRIVGVACAALSALALSVTSASA.

Belongs to the FlgI family. In terms of assembly, the basal body constitutes a major portion of the flagellar organelle and consists of four rings (L,P,S, and M) mounted on a central rod.

The protein resides in the periplasm. It is found in the bacterial flagellum basal body. In terms of biological role, assembles around the rod to form the L-ring and probably protects the motor/basal body from shearing forces during rotation. The chain is Flagellar P-ring protein 1 from Bradyrhizobium diazoefficiens (strain JCM 10833 / BCRC 13528 / IAM 13628 / NBRC 14792 / USDA 110).